Here is a 247-residue protein sequence, read N- to C-terminus: Carboxy-S-adenosyl-L-methionine synthase (247 aa).

S-adenosyl-L-methionine-binding positions include tyrosine 39, 64 to 66 (GCS), 89 to 90 (DN), 117 to 118 (DI), asparagine 132, and arginine 199.

The protein belongs to the class I-like SAM-binding methyltransferase superfamily. Cx-SAM synthase family. Homodimer.

It carries out the reaction prephenate + S-adenosyl-L-methionine = carboxy-S-adenosyl-L-methionine + 3-phenylpyruvate + H2O. Its function is as follows. Catalyzes the conversion of S-adenosyl-L-methionine (SAM) to carboxy-S-adenosyl-L-methionine (Cx-SAM). The protein is Carboxy-S-adenosyl-L-methionine synthase of Escherichia coli (strain K12 / MC4100 / BW2952).